The following is a 414-amino-acid chain: Serine hydroxymethyltransferase (414 aa).

(6S)-5,6,7,8-tetrahydrofolate is bound by residues leucine 121 and 125-127; that span reads GHL. Position 229 is an N6-(pyridoxal phosphate)lysine (lysine 229).

It belongs to the SHMT family. In terms of assembly, homodimer. Pyridoxal 5'-phosphate serves as cofactor.

The protein resides in the cytoplasm. It carries out the reaction (6R)-5,10-methylene-5,6,7,8-tetrahydrofolate + glycine + H2O = (6S)-5,6,7,8-tetrahydrofolate + L-serine. Its pathway is one-carbon metabolism; tetrahydrofolate interconversion. The protein operates within amino-acid biosynthesis; glycine biosynthesis; glycine from L-serine: step 1/1. Catalyzes the reversible interconversion of serine and glycine with tetrahydrofolate (THF) serving as the one-carbon carrier. This reaction serves as the major source of one-carbon groups required for the biosynthesis of purines, thymidylate, methionine, and other important biomolecules. Also exhibits THF-independent aldolase activity toward beta-hydroxyamino acids, producing glycine and aldehydes, via a retro-aldol mechanism. This is Serine hydroxymethyltransferase from Variovorax paradoxus (strain S110).